The following is a 351-amino-acid chain: Signal recognition particle receptor FtsY (351 aa).

Residues 152 to 159 (GVNGSGKT), 235 to 239 (DTAGR), and 299 to 302 (TKMD) each bind GTP.

The protein belongs to the GTP-binding SRP family. FtsY subfamily. Part of the signal recognition particle protein translocation system, which is composed of SRP and FtsY.

It is found in the cell membrane. The protein resides in the cytoplasm. It carries out the reaction GTP + H2O = GDP + phosphate + H(+). Functionally, involved in targeting and insertion of nascent membrane proteins into the cytoplasmic membrane. Acts as a receptor for the complex formed by the signal recognition particle (SRP) and the ribosome-nascent chain (RNC). The polypeptide is Signal recognition particle receptor FtsY (Metamycoplasma hominis (strain ATCC 23114 / DSM 25592 / NBRC 14850 / NCTC 10111 / PG21) (Mycoplasma hominis)).